A 171-amino-acid chain; its full sequence is 3-hydroxydecanoyl-[acyl-carrier-protein] dehydratase (171 aa).

Histidine 70 is a catalytic residue.

This sequence belongs to the thioester dehydratase family. FabA subfamily. Homodimer.

The protein resides in the cytoplasm. It carries out the reaction a (3R)-hydroxyacyl-[ACP] = a (2E)-enoyl-[ACP] + H2O. The enzyme catalyses (3R)-hydroxydecanoyl-[ACP] = (2E)-decenoyl-[ACP] + H2O. The catalysed reaction is (2E)-decenoyl-[ACP] = (3Z)-decenoyl-[ACP]. It participates in lipid metabolism; fatty acid biosynthesis. Functionally, necessary for the introduction of cis unsaturation into fatty acids. Catalyzes the dehydration of (3R)-3-hydroxydecanoyl-ACP to E-(2)-decenoyl-ACP and then its isomerization to Z-(3)-decenoyl-ACP. Can catalyze the dehydratase reaction for beta-hydroxyacyl-ACPs with saturated chain lengths up to 16:0, being most active on intermediate chain length. The protein is 3-hydroxydecanoyl-[acyl-carrier-protein] dehydratase of Shewanella loihica (strain ATCC BAA-1088 / PV-4).